The following is a 1530-amino-acid chain: MPIRPDLQQLEKCIDDALRKNDFKPLKTLLQIDICEDVKIKCSKQFFHKVDNLICRELNKEDIHNVSAILVSVGRCGKNISVLGQAGLLTMIKQGLIQKMVAWFEKSKDIIQSQGNSKDEAVLNMIEDLVDLLLVIHDVSDEGKKQVVESFVPRICSLVIDSRVNICIQQEIIKKMNAMLDKMPQDARKILSNQEMLILMSSMGERILDAGDYDLQVGIVEALCRMTTEKQRQELAHQWFSMDFIAKAFKRIKDSEFETDCRIFLNLVNGMLGDKRRVFTFPCLSAFLDKYELQIPSDEKLEEFWIDFNLGSQTLSFYIAGDNDDHQWEAVTVPEEKVQIYSIEVRESKKLLTIILKNTVKISKREGKELLLYFDASLEITNVTQKIFGATKHRESIRKQGISVAKTSLHILFDASGSQILVPESQISPVGEELVSLKEKSKSPKEFAKPSKYIKNSDKGNRNNSQLEKTTPSKRKMSEASMIVSGADRYTMRSPVLFSNTSIPPRRRRIKPPLQMTSSAEKPSVSQTSENRVDNAASLKSRSSEGRHRRDNIDKHIKTAKCVENTENKNVEFPNQNFSELQDVIPDSQAAEKRDHTILPGVLDNICGNKIHSKWACWTPVTNIELCNNQRASTSSGDTLNQDIVINKKLTKQKSSSSISDHNSEGTGKVKYKKEQTDHIKIDKAEVEVCKKHNQQQNHPKYSGQKNTENAKQSDWPVESETTFKSVLLNKTIEESLIYRKKYILSKDVNTATCDKNPSASKNVQSHRKAEKELTSELNSWDSKQKKMREKSKGKEFTNVAESLISQINKRYKTKDDIKSTRKLKESLINSGFSNKPVVQLSKEKVQKKSYRKLKTTFVNVTSECPVNDVYNFNLNGADDPIIKLGIQEFQATAKEACADRSIRLVGPRNHDELKSSVKTKDKKIITNHQKKNLFSDTETEYRCDDSKTDISWLREPKSKPQLIDYSRNKNVKNHKSGKSRSSLEKGQPSSKMTPSKNITKKMDKTIPEGRIRLPRKATKTKKNYKDLSNSESECEQEFSHSFKENIPVKEENIHSRMKTVKLPKKQQKVFCAETEKELSKQWKNSSLLKDAIRDNCLDLSPRSLSGSPSSIEVTRCIEKITEKDFTQDYDCITKSISPYPKTSSLESLNSNSGVGGTIKSPKNNEKNFLCASESCSPIPRPLFLPRHTPTKSNTIVNRKKISSLVLTQETQNSNSYSDVSSYSSEERFMEIESPHINENYIQSKREESHLASSLSKSSEGREKTWFDMPCDATHVSGPTQHLSRKRIYIEDNLSNSNEVEMEEKGERRANLLPKKLCKIEDADHHIHKMSESVSSLSTNDFSIPWETWQNEFAGIEMTYETYERLNSEFKRRNNIRHKMLSYFTTQSWKTAQQHLRTMNHQSQDSRIKKLDKFQFIIIEELENFEKDSQSLKDLEKEFVDFWEKIFQKFSAYQKSEQQRLHLLKTSLAKSVFCNTDSEETVFTSEMCLMKEDMKVLQDRLLKDMLEEELLNVRRELMSVFMSHERNANV.

Positions 439–461 (EKSKSPKEFAKPSKYIKNSDKGN) are enriched in basic and acidic residues. A disordered region spans residues 439–480 (EKSKSPKEFAKPSKYIKNSDKGNRNNSQLEKTTPSKRKMSEA). Phosphoserine is present on residues Ser-457 and Ser-465. Position 471 is a phosphothreonine (Thr-471). Phosphoserine is present on residues Ser-494, Ser-519, Ser-529, and Ser-538. A disordered region spans residues 496–555 (VLFSNTSIPPRRRRIKPPLQMTSSAEKPSVSQTSENRVDNAASLKSRSSEGRHRRDNIDK). Residues 515–530 (QMTSSAEKPSVSQTSE) are compositionally biased toward polar residues. Positions 542–555 (RSSEGRHRRDNIDK) are enriched in basic and acidic residues. Thr-619 is modified (phosphothreonine). Disordered stretches follow at residues 653-676 (QKSSSSISDHNSEGTGKVKYKKEQ), 693-717 (HNQQQNHPKYSGQKNTENAKQSDWP), and 755-795 (DKNP…SKGK). Residues Ser-660 and Ser-664 each carry the phosphoserine modification. Polar residues-rich tracts occupy residues 695-713 (QQQNHPKYSGQKNTENAKQ) and 755-764 (DKNPSASKNV). Residue Ser-936 is modified to Phosphoserine. Thr-938 is subject to Phosphothreonine. The segment at 962 to 1003 (QLIDYSRNKNVKNHKSGKSRSSLEKGQPSSKMTPSKNITKKM) is disordered. The span at 970-979 (KNVKNHKSGK) shows a compositional bias: basic residues. Positions 988–998 (QPSSKMTPSKN) are enriched in polar residues. Residues Ser-1136, Ser-1138, Ser-1145, Ser-1161, and Ser-1177 each carry the phosphoserine modification. Thr-1189 is subject to Phosphothreonine. 5 positions are modified to phosphoserine: Ser-1204, Ser-1234, Ser-1253, Ser-1295, and Ser-1297. Thr-1339 carries the phosphothreonine modification.

The protein belongs to the SYCP2 family. In terms of assembly, component of the lateral elements of synaptonemal complexes. Heterodimer with SYCP3. Interacts with SMC1A and SMC3. Interacts with TEX11. In terms of processing, phosphorylated.

It is found in the nucleus. The protein localises to the chromosome. Its function is as follows. Major component of the axial/lateral elements of synaptonemal complexes (SCS) during meiotic prophase. Plays a role in the assembly of synaptonemal complexes. Required for normal meiotic chromosome synapsis during oocyte and spermatocyte development and for normal male and female fertility. Required for insertion of SYCP3 into synaptonemal complexes. May be involved in the organization of chromatin by temporarily binding to DNA scaffold attachment regions. Requires SYCP3, but not SYCP1, in order to be incorporated into the axial/lateral elements. The chain is Synaptonemal complex protein 2 (SYCP2) from Homo sapiens (Human).